A 152-amino-acid chain; its full sequence is ARL14 effector protein-like (152 aa).

Positions Met-1–Thr-16 are enriched in polar residues. The interval Met-1–Ile-27 is disordered.

The sequence is that of ARL14 effector protein-like (Arl14epl) from Mus musculus (Mouse).